The chain runs to 100 residues: MVPVTWYLWLAAMLFTIGLSGVLLKRNALIVMMSVELMLNAANLTFLAFARQTGDVGGHAIAFFVIAVAAAEAAVGLAVVIAIYRTRGTVNIDEVRALHE.

3 helical membrane passes run 4–24, 29–49, and 61–81; these read VTWY…GVLL, LIVM…FLAF, and IAFF…AVVI.

It belongs to the complex I subunit 4L family. In terms of assembly, NDH-1 is composed of 14 different subunits. Subunits NuoA, H, J, K, L, M, N constitute the membrane sector of the complex.

It localises to the cell inner membrane. It catalyses the reaction a quinone + NADH + 5 H(+)(in) = a quinol + NAD(+) + 4 H(+)(out). In terms of biological role, NDH-1 shuttles electrons from NADH, via FMN and iron-sulfur (Fe-S) centers, to quinones in the respiratory chain. The immediate electron acceptor for the enzyme in this species is believed to be ubiquinone. Couples the redox reaction to proton translocation (for every two electrons transferred, four hydrogen ions are translocated across the cytoplasmic membrane), and thus conserves the redox energy in a proton gradient. This is NADH-quinone oxidoreductase subunit K from Anaeromyxobacter sp. (strain Fw109-5).